Here is a 441-residue protein sequence, read N- to C-terminus: MSNVTHQPKIGFVSLGCPKNLVDSERILTELRTEGYDVVPRYDDADMVIVNTCGFIDSAVQESLEAIGEALNENGKVIVTGCLGAKEDQIREVHPKVLEITGPHSYEQVLQHVHHYVPKPKHNPFLSLVPEQDVKLTPRHYAYLKISEGCNHRCTFCIIPSMRGDLVSRPIGDVLSEAKRLVDAGVKEILVISQDTSAYGVDVKHRTGFHNGEPVKTSMVSLCEQLSKLGVWTRLHYVYPYPHVDDVIPLMAEGKILPYLDIPLQHASPRILKLMKRPGSVDRQLARIKQWREICPELTLRSTFIVGFPGETEEDFQMLLDFLKEARLDRVGCFKYSPVEGAGANDLPDQVPEEVKEERWNRFMQLQQQISAERLQEKVGREILVIVDEVDEEGAIGRSMADAPEIDGAVYLNGETNVKPGDIVRVKVENADEYDLWGSRV.

In terms of domain architecture, MTTase N-terminal spans 8–118; it reads PKIGFVSLGC…VLQHVHHYVP (111 aa). Residues Cys-17, Cys-53, Cys-82, Cys-150, Cys-154, and Cys-157 each contribute to the [4Fe-4S] cluster site. In terms of domain architecture, Radical SAM core spans 136–373; it reads LTPRHYAYLK…MQLQQQISAE (238 aa). Residues 376–441 form the TRAM domain; it reads QEKVGREILV…DEYDLWGSRV (66 aa).

It belongs to the methylthiotransferase family. RimO subfamily. [4Fe-4S] cluster serves as cofactor.

Its subcellular location is the cytoplasm. The catalysed reaction is L-aspartate(89)-[ribosomal protein uS12]-hydrogen + (sulfur carrier)-SH + AH2 + 2 S-adenosyl-L-methionine = 3-methylsulfanyl-L-aspartate(89)-[ribosomal protein uS12]-hydrogen + (sulfur carrier)-H + 5'-deoxyadenosine + L-methionine + A + S-adenosyl-L-homocysteine + 2 H(+). Functionally, catalyzes the methylthiolation of an aspartic acid residue of ribosomal protein uS12. The polypeptide is Ribosomal protein uS12 methylthiotransferase RimO (Salmonella paratyphi B (strain ATCC BAA-1250 / SPB7)).